The following is a 283-amino-acid chain: Thymidylate synthase (283 aa).

Residue Arg-22 coordinates dUMP. Catalysis depends on Cys-160, which acts as the Nucleophile. DUMP is bound by residues 180–183, Asn-191, and 221–223; these read RSCD and HIY. Asp-183 is a binding site for (6R)-5,10-methylene-5,6,7,8-tetrahydrofolate. A (6R)-5,10-methylene-5,6,7,8-tetrahydrofolate-binding site is contributed by Ser-282.

It belongs to the thymidylate synthase family. Bacterial-type ThyA subfamily. Homodimer.

The protein localises to the cytoplasm. It carries out the reaction dUMP + (6R)-5,10-methylene-5,6,7,8-tetrahydrofolate = 7,8-dihydrofolate + dTMP. It functions in the pathway pyrimidine metabolism; dTTP biosynthesis. Functionally, catalyzes the reductive methylation of 2'-deoxyuridine-5'-monophosphate (dUMP) to 2'-deoxythymidine-5'-monophosphate (dTMP) while utilizing 5,10-methylenetetrahydrofolate (mTHF) as the methyl donor and reductant in the reaction, yielding dihydrofolate (DHF) as a by-product. This enzymatic reaction provides an intracellular de novo source of dTMP, an essential precursor for DNA biosynthesis. This is Thymidylate synthase from Mannheimia succiniciproducens (strain KCTC 0769BP / MBEL55E).